The sequence spans 267 residues: Sorbitol-6-phosphate 2-dehydrogenase (267 aa).

Residue 9-38 (DNVIIVTGGASGIGLAIVDELLSQGAHVQM) coordinates NAD(+). Serine 147 provides a ligand contact to substrate. Catalysis depends on tyrosine 160, which acts as the Proton acceptor.

This sequence belongs to the short-chain dehydrogenases/reductases (SDR) family. In terms of assembly, homotetramer.

It carries out the reaction D-sorbitol 6-phosphate + NAD(+) = beta-D-fructose 6-phosphate + NADH + H(+). It participates in carbohydrate metabolism; D-sorbitol degradation; D-fructose 6-phosphate from D-sorbitol 6-phosphate: step 1/1. This Klebsiella pneumoniae protein is Sorbitol-6-phosphate 2-dehydrogenase (sorD).